We begin with the raw amino-acid sequence, 76 residues long: Large ribosomal subunit protein eL20 (76 aa).

The protein belongs to the eukaryotic ribosomal protein eL20 family. As to quaternary structure, part of the 50S ribosomal subunit. Binds 23S rRNA.

This chain is Large ribosomal subunit protein eL20, found in Methanococcus maripaludis (strain C5 / ATCC BAA-1333).